Here is a 240-residue protein sequence, read N- to C-terminus: MAESREDCVFLSKLAEQSERYDEMVQYMKQVAALNTELSVEERNLLSVAYKNVIGSRRASWRIITSLEQKEQAKGNDKHVEIIKGYRAKIEDELAKYCDDVLKVIKENLLPNASTSESKVFYKKMEGDYYRYYAEFTVDEKRQEVADKSLAAYTEATEISNADLAPTHPIRLGLALNFSVFYYEIMNDADKACQLAKQAFDDSIAKLDEVPESSYKDSTLIMQLLRDNLTLWTSDTADEE.

This sequence belongs to the 14-3-3 family. In terms of assembly, interacts with coactosin. Interacts with ACTO/actophorin.

The protein resides in the cytoplasm. It is found in the cell projection. Its subcellular location is the phagocytic cup. Adapter protein which is required for phagocytosis and motility, probably by regulating actin cytoskeleton dynamics. During phagocytosis, plays a role in the initiation and/or formation of the phagocytic cup and is involved in the recruitment of the actin binding protein coactosin to the phagocytic cup. The chain is 14-3-3 protein 3 from Entamoeba histolytica (strain ATCC 30459 / HM-1:IMSS / ABRM).